The following is a 230-amino-acid chain: Ribonuclease 3 (230 aa).

The RNase III domain occupies 6–135; sequence TTELKERYGI…FLGALYLDQK (130 aa). A Mg(2+)-binding site is contributed by glutamate 48. Aspartate 52 is an active-site residue. Aspartate 121 and glutamate 124 together coordinate Mg(2+). Residue glutamate 124 is part of the active site. The DRBM domain occupies 161–230; sequence DHKTQLQEVL…AERALKSIPQ (70 aa).

It belongs to the ribonuclease III family. Homodimer. Mg(2+) serves as cofactor.

It localises to the cytoplasm. It carries out the reaction Endonucleolytic cleavage to 5'-phosphomonoester.. Functionally, digests double-stranded RNA. Involved in the processing of primary rRNA transcript to yield the immediate precursors to the large and small rRNAs (23S and 16S). Processes some mRNAs, and tRNAs when they are encoded in the rRNA operon. Processes pre-crRNA and tracrRNA of type II CRISPR loci if present in the organism. The polypeptide is Ribonuclease 3 (Enterococcus faecalis (strain ATCC 700802 / V583)).